The sequence spans 208 residues: uncharacterized protein (208 aa).

The span at 1 to 18 shows a compositional bias: basic and acidic residues; it reads MSPTKDSHPSPHFPRDSG. Disordered regions lie at residues 1–122 and 135–208; these read MSPT…LPPP and RECH…TPDG.

This is an uncharacterized protein from Homo sapiens (Human).